A 575-amino-acid polypeptide reads, in one-letter code: 2-succinyl-5-enolpyruvyl-6-hydroxy-3-cyclohexene-1-carboxylate synthase (575 aa).

This sequence belongs to the TPP enzyme family. MenD subfamily. In terms of assembly, homodimer. Requires Mg(2+) as cofactor. It depends on Mn(2+) as a cofactor. Thiamine diphosphate serves as cofactor.

It catalyses the reaction isochorismate + 2-oxoglutarate + H(+) = 5-enolpyruvoyl-6-hydroxy-2-succinyl-cyclohex-3-ene-1-carboxylate + CO2. Its pathway is quinol/quinone metabolism; 1,4-dihydroxy-2-naphthoate biosynthesis; 1,4-dihydroxy-2-naphthoate from chorismate: step 2/7. The protein operates within quinol/quinone metabolism; menaquinone biosynthesis. Catalyzes the thiamine diphosphate-dependent decarboxylation of 2-oxoglutarate and the subsequent addition of the resulting succinic semialdehyde-thiamine pyrophosphate anion to isochorismate to yield 2-succinyl-5-enolpyruvyl-6-hydroxy-3-cyclohexene-1-carboxylate (SEPHCHC). The sequence is that of 2-succinyl-5-enolpyruvyl-6-hydroxy-3-cyclohexene-1-carboxylate synthase from Syntrophus aciditrophicus (strain SB).